A 378-amino-acid chain; its full sequence is Erythronate-4-phosphate dehydrogenase (378 aa).

Residues Ser45 and Thr66 each coordinate substrate. NAD(+) contacts are provided by Asp142 and Thr169. Residue Arg202 is part of the active site. Position 226 (Asp226) interacts with NAD(+). Residue Glu231 is part of the active site. His248 serves as the catalytic Proton donor. Gly251 contributes to the NAD(+) binding site. Position 252 (Tyr252) interacts with substrate.

Belongs to the D-isomer specific 2-hydroxyacid dehydrogenase family. PdxB subfamily. In terms of assembly, homodimer.

It is found in the cytoplasm. It catalyses the reaction 4-phospho-D-erythronate + NAD(+) = (R)-3-hydroxy-2-oxo-4-phosphooxybutanoate + NADH + H(+). The protein operates within cofactor biosynthesis; pyridoxine 5'-phosphate biosynthesis; pyridoxine 5'-phosphate from D-erythrose 4-phosphate: step 2/5. Catalyzes the oxidation of erythronate-4-phosphate to 3-hydroxy-2-oxo-4-phosphonooxybutanoate. This is Erythronate-4-phosphate dehydrogenase from Cellvibrio japonicus (strain Ueda107) (Pseudomonas fluorescens subsp. cellulosa).